The sequence spans 863 residues: MPKKNSPLLPKETTTTQSSVDTSGSSNLTWPVSEHTIRRPLWARLLGQILDPWLDLSIEPEHSVQYNDGRPIIYVLEDYGLCNTLILDKACRKTKLPSPLIPLSGNPLQRKRAYLALSRRSSSNSLIPNQRGGKTHSDSLANLLQAHRIRDTLDVHLVPVSIFIGRTPDRQSGWFAVLFSENWALVGRFRRILAILLNGRNTIVCFAPPISVRQTLNEGLPPERTLRKLQRVLRTHFRRIRETVIGPDLSTRRLLVDNVLATEAVREAIGAQAKRDGTDLSETWRKAQAYAWEIAADYSSPVIRSADFLFSHVWNRIYAGVLVHHVDSFKEISPGHEIVYVPSHRSHMDYLLLSYCLYKCSIGLPHIVAGINLNLPVVGTLLRKCGAFFIRRSIKGNMLYSVVLSEYVAQLVAGGYSLEYFIEGGRSRTGRLLQPKGGMIMMTVQAFLRQPRRPVLFQPIYIGYEKLMEGTSYLDELSGEPKKKESIWRVFWNIPKVLKQKYGQVVVNFGEPIALNDVLAELAPEWEGQALNENEKPAWLSSTVNHLARQIQTRINSAADVNPINLLALALLSTPKHAMGEADLIAQITLCKKILLELPYSNRVTITPHTPERIIAHAEQINILTRVHHPLGDVLRVDGDNAVLLSYFRNNVLHLFTASAWVACCFKNNRRMSRIALIRLGVGMYPFLQAELFLPWTEDQFAQHIQQVIELFVREGLLLSAGNEEEDPLTRNTSQTDEVFRLRAISHSLQQAFERYYITISILVKNGPGTLSASELESLCQLAAQRLSLLYASTAPEFFDKGLFRGFIQKLRELNLVWPDTYSKLLFDERLDTSAKDAQVILGRELRHTIERISPEATKPAPK.

Residues 1–29 form a disordered region; sequence MPKKNSPLLPKETTTTQSSVDTSGSSNLT. The segment covering 12-29 has biased composition (polar residues); the sequence is ETTTTQSSVDTSGSSNLT. The HXXXXD motif motif lies at 343–348; sequence SHRSHM.

Belongs to the GPAT/DAPAT family.

The protein resides in the cell inner membrane. The catalysed reaction is sn-glycerol 3-phosphate + an acyl-CoA = a 1-acyl-sn-glycero-3-phosphate + CoA. It functions in the pathway phospholipid metabolism; CDP-diacylglycerol biosynthesis; CDP-diacylglycerol from sn-glycerol 3-phosphate: step 1/3. This chain is Glycerol-3-phosphate acyltransferase, found in Xylella fastidiosa (strain M23).